The primary structure comprises 445 residues: Serine--tRNA ligase (445 aa).

229-231 (TAE) contributes to the L-serine binding site. ATP-binding positions include 260–262 (RKE) and Val-276. Glu-283 contacts L-serine. 347–350 (EVSS) lines the ATP pocket. Ser-383 lines the L-serine pocket.

It belongs to the class-II aminoacyl-tRNA synthetase family. Type-1 seryl-tRNA synthetase subfamily. As to quaternary structure, homodimer. The tRNA molecule binds across the dimer.

The protein resides in the cytoplasm. It carries out the reaction tRNA(Ser) + L-serine + ATP = L-seryl-tRNA(Ser) + AMP + diphosphate + H(+). It catalyses the reaction tRNA(Sec) + L-serine + ATP = L-seryl-tRNA(Sec) + AMP + diphosphate + H(+). It functions in the pathway aminoacyl-tRNA biosynthesis; selenocysteinyl-tRNA(Sec) biosynthesis; L-seryl-tRNA(Sec) from L-serine and tRNA(Sec): step 1/1. In terms of biological role, catalyzes the attachment of serine to tRNA(Ser). Is also able to aminoacylate tRNA(Sec) with serine, to form the misacylated tRNA L-seryl-tRNA(Sec), which will be further converted into selenocysteinyl-tRNA(Sec). In Thermomicrobium roseum (strain ATCC 27502 / DSM 5159 / P-2), this protein is Serine--tRNA ligase.